Reading from the N-terminus, the 323-residue chain is NADH-ubiquinone oxidoreductase chain 1 (323 aa).

8 helical membrane passes run 9–29 (ILNPLIYMVPVLLAVAFLTLI), 76–96 (LFVLPVLALTLALTLWAPMPM), 107–127 (ILFVLALSSLAVYSILGSGWA), 145–165 (ISYEVSLGLILLSVIIFSGGF), 175–195 (EATWLALPAWPLAAMWYISTL), 227–247 (LFFLAEYANILLMNTLSAVLF), 258–278 (EFTSLTLMTKAALLSMVFLWV), and 298–318 (FLPLTLALVIWHLSLSTACAG).

It belongs to the complex I subunit 1 family.

Its subcellular location is the mitochondrion inner membrane. The enzyme catalyses a ubiquinone + NADH + 5 H(+)(in) = a ubiquinol + NAD(+) + 4 H(+)(out). Core subunit of the mitochondrial membrane respiratory chain NADH dehydrogenase (Complex I) that is believed to belong to the minimal assembly required for catalysis. Complex I functions in the transfer of electrons from NADH to the respiratory chain. The immediate electron acceptor for the enzyme is believed to be ubiquinone. The sequence is that of NADH-ubiquinone oxidoreductase chain 1 (MT-ND1) from Gadus morhua (Atlantic cod).